The sequence spans 155 residues: Ribosome maturation factor RimP (155 aa).

Belongs to the RimP family.

It localises to the cytoplasm. Required for maturation of 30S ribosomal subunits. This is Ribosome maturation factor RimP from Phocaeicola vulgatus (strain ATCC 8482 / DSM 1447 / JCM 5826 / CCUG 4940 / NBRC 14291 / NCTC 11154) (Bacteroides vulgatus).